The following is a 513-amino-acid chain: Activin receptor type-2A (513 aa).

Positions 1 to 19 are cleaved as a signal peptide; sequence MGAATKLAFAVFLISCSSG. The Extracellular segment spans residues 20 to 139; it reads AILGRSETQE…VTPKPPLFNT (120 aa). 5 cysteine pairs are disulfide-bonded: Cys30–Cys60, Cys50–Cys78, Cys85–Cys104, Cys91–Cys103, and Cys105–Cys110. N-linked (GlcNAc...) asparagine glycosylation is found at Asn43 and Asn66. The helical transmembrane segment at 140-160 threads the bilayer; the sequence is LLYSLVPIMGIAVIVLFSFWM. Residues 161–513 lie on the Cytoplasmic side of the membrane; it reads YRHHKLAYPP…VDFPPKESSL (353 aa). The Protein kinase domain occupies 192–485; it reads LQLLEIKARG…EERIIQMQKL (294 aa). ATP-binding positions include 198–206 and Lys219; that span reads KARGRFGCV. The active-site Proton acceptor is Asp322.

It belongs to the protein kinase superfamily. TKL Ser/Thr protein kinase family. TGFB receptor subfamily. Mg(2+) is required as a cofactor. Requires Mn(2+) as cofactor. Expressed in hen anterior pituitary during the ovulatory cycle and in the ovarian follicle.

It is found in the cell membrane. It carries out the reaction L-threonyl-[receptor-protein] + ATP = O-phospho-L-threonyl-[receptor-protein] + ADP + H(+). The catalysed reaction is L-seryl-[receptor-protein] + ATP = O-phospho-L-seryl-[receptor-protein] + ADP + H(+). Its function is as follows. On ligand binding, forms a receptor complex consisting of two type II and two type I transmembrane serine/threonine kinases. Type II receptors phosphorylate and activate type I receptors which autophosphorylate, then bind and activate SMAD transcriptional regulators. Receptor for activin A, activin B and inhibin A. May modulate neuropeptide expression in dorsal root ganglia (DRG) neurons and ovarian follicle development. The protein is Activin receptor type-2A (ACVR2A) of Gallus gallus (Chicken).